The chain runs to 358 residues: CRS2-associated factor 2, mitochondrial (358 aa).

The N-terminal 28 residues, 1–28 (MLSIRRSLTLAKEPKDLFLFLCNLRARC), are a transit peptide targeting the mitochondrion. The disordered stretch occupies residues 35-64 (DPPFSPLSKPTKPPKEKKKQKTKKQDQSSE). CRM domains follow at residues 141–239 (ETLT…SRPI) and 261–357 (DGLE…ELVT).

As to quaternary structure, part of large ribonucleo-protein complexes that include group IIB introns.

The protein resides in the mitochondrion. May be involved in the splicing of group IIB introns in mitochondria. This is CRS2-associated factor 2, mitochondrial from Arabidopsis thaliana (Mouse-ear cress).